A 186-amino-acid polypeptide reads, in one-letter code: Centromere protein M (186 aa).

It is found in the nucleus. The protein localises to the chromosome. Its subcellular location is the centromere. In terms of biological role, probable component of a centromeric complex involved in assembly of kinetochore proteins, mitotic progression and chromosome segregation. The protein is Centromere protein M (cenpm) of Danio rerio (Zebrafish).